The primary structure comprises 998 residues: Regulator of telomere elongation helicase 1 homolog (998 aa).

Residues 7 to 324 enclose the Helicase ATP-binding domain; it reads AGIPVHFPFE…KEMLLELEKA (318 aa). 42–49 is an ATP binding site; that stretch reads SPTGTGKT. [4Fe-4S] cluster is bound by residues Cys-148, Cys-166, Cys-175, and Cys-211. The DEAH box signature appears at 254–257; the sequence is DEAH. The tract at residues 426 to 454 is disordered; it reads QNAGKPAPKQQQQGGWLGKGNNTSNSSSS. Phosphothreonine is present on Thr-887.

This sequence belongs to the helicase family. RAD3/XPD subfamily.

The protein resides in the nucleus. It carries out the reaction ATP + H2O = ADP + phosphate + H(+). Functionally, a probable ATP-dependent DNA helicase implicated in DNA repair and the maintenance of genomic stability. Acts as an anti-recombinase to counteract toxic recombination and limit crossover during meiosis. Regulates meiotic recombination and crossover homeostasis by physically dissociating strand invasion events and thereby promotes noncrossover repair by meiotic synthesis dependent strand annealing (SDSA) as well as disassembly of D loop recombination intermediates. This Drosophila willistoni (Fruit fly) protein is Regulator of telomere elongation helicase 1 homolog.